A 258-amino-acid polypeptide reads, in one-letter code: Undecaprenyl-diphosphatase (258 aa).

The next 8 membrane-spanning stretches (helical) occupy residues 1-21, 42-62, 71-91, 96-116, 134-154, 173-193, 211-231, and 237-257; these read MSIIDAVILGIVEGLTEFLPV, LKCFEVVIQLGSILAVVFTFF, LWIKLIIGFLPTAAIGYLLYS, LFSQNVVVYMLIIWGVIFIVV, GISYKQAFFIGLSQCFAMVPG, QTAAAFSFLLAVPTMFAATFY, LFLLGGFVAFLVALFAIKMFL, and FDYIPFGIYRILIAFAFMFFV.

It belongs to the UppP family.

Its subcellular location is the cell inner membrane. It catalyses the reaction di-trans,octa-cis-undecaprenyl diphosphate + H2O = di-trans,octa-cis-undecaprenyl phosphate + phosphate + H(+). In terms of biological role, catalyzes the dephosphorylation of undecaprenyl diphosphate (UPP). Confers resistance to bacitracin. The protein is Undecaprenyl-diphosphatase of Campylobacter hominis (strain ATCC BAA-381 / DSM 21671 / CCUG 45161 / LMG 19568 / NCTC 13146 / CH001A).